The chain runs to 368 residues: Alanine racemase (368 aa).

Lys40 serves as the catalytic Proton acceptor; specific for D-alanine. N6-(pyridoxal phosphate)lysine is present on Lys40. Residue Arg136 coordinates substrate. Tyr263 acts as the Proton acceptor; specific for L-alanine in catalysis. Met310 is a substrate binding site.

The protein belongs to the alanine racemase family. It depends on pyridoxal 5'-phosphate as a cofactor.

The catalysed reaction is L-alanine = D-alanine. Its pathway is amino-acid biosynthesis; D-alanine biosynthesis; D-alanine from L-alanine: step 1/1. Catalyzes the interconversion of L-alanine and D-alanine. May also act on other amino acids. The polypeptide is Alanine racemase (alr) (Streptococcus gordonii (strain Challis / ATCC 35105 / BCRC 15272 / CH1 / DL1 / V288)).